We begin with the raw amino-acid sequence, 578 residues long: Polypeptide N-acetylgalactosaminyltransferase 4 (578 aa).

The Cytoplasmic portion of the chain corresponds to 1–12 (MAVRWTWAGKSC). Residues 13 to 35 (LLLALLTLAYILVEFSVSTLYAS) form a helical; Signal-anchor for type II membrane protein membrane-spanning segment. Over 36–578 (PGAGGARELG…DKNQLWRFEK (543 aa)) the chain is Lumenal. 5 disulfides stabilise this stretch: Cys124-Cys357, Cys348-Cys421, Cys457-Cys477, Cys503-Cys518, and Cys547-Cys565. Positions 134–243 (LPTTSVIIAF…TGWLEPLLER (110 aa)) are catalytic subdomain A. Residues Asp175 and Arg204 each contribute to the substrate site. 2 residues coordinate Mn(2+): Asp227 and His229. Positions 303–365 (PIRSPTMAGG…PCSHVGHVFP (63 aa)) are catalytic subdomain B. Trp334 contributes to the substrate binding site. His362 contacts Mn(2+). Residue Tyr370 coordinates substrate. In terms of domain architecture, Ricin B-type lectin spans 444–577 (WHGAIRSMGI…LDKNQLWRFE (134 aa)). The N-linked (GlcNAc...) asparagine glycan is linked to Asn471.

It belongs to the glycosyltransferase 2 family. GalNAc-T subfamily. Mn(2+) serves as cofactor. Highly expressed in sublingual gland, stomach, colon, small intestine and cervix. Expressed at intermediate levels in kidney, ovary, lung and uterus. Weakly expressed in spleen, liver, heart and brain. Not expressed in submandibular and parotid glands, skeletal muscle and testis.

Its subcellular location is the golgi apparatus membrane. The enzyme catalyses L-seryl-[protein] + UDP-N-acetyl-alpha-D-galactosamine = a 3-O-[N-acetyl-alpha-D-galactosaminyl]-L-seryl-[protein] + UDP + H(+). The catalysed reaction is L-threonyl-[protein] + UDP-N-acetyl-alpha-D-galactosamine = a 3-O-[N-acetyl-alpha-D-galactosaminyl]-L-threonyl-[protein] + UDP + H(+). It participates in protein modification; protein glycosylation. In terms of biological role, catalyzes the initial reaction in O-linked oligosaccharide biosynthesis, the transfer of an N-acetyl-D-galactosamine residue to a serine or threonine residue on the protein receptor. Has a highest activity toward EA2 peptide substrate and a much lower activity with EPO-T, Muc2, Muc1a, Muc1b. The protein is Polypeptide N-acetylgalactosaminyltransferase 4 (Galnt4) of Mus musculus (Mouse).